The sequence spans 319 residues: Ferrochelatase (319 aa).

The Fe cation site is built by H192 and E271.

It belongs to the ferrochelatase family.

The protein resides in the cytoplasm. The catalysed reaction is heme b + 2 H(+) = protoporphyrin IX + Fe(2+). Its pathway is porphyrin-containing compound metabolism; protoheme biosynthesis; protoheme from protoporphyrin-IX: step 1/1. Functionally, catalyzes the ferrous insertion into protoporphyrin IX. The chain is Ferrochelatase from Geotalea daltonii (strain DSM 22248 / JCM 15807 / FRC-32) (Geobacter daltonii).